A 361-amino-acid chain; its full sequence is G-protein coupled receptor 68 (361 aa).

The Extracellular portion of the chain corresponds to 1–12; sequence MGNITADNTSMN. 2 N-linked (GlcNAc...) asparagine glycosylation sites follow: Asn-3 and Asn-8. Residues 13 to 49 traverse the membrane as a helical segment; that stretch reads CDIDHTIHQTLAPVVYVMVLVVGFPANCLSLYYGYLQ. 2 disulfides stabilise this stretch: Cys-13–Cys-258 and Cys-94–Cys-172. Residues 50–53 are Cytoplasmic-facing; the sequence is IKAR. The chain crosses the membrane as a helical span at residues 54–84; the sequence is NELGVYLCNLTVADLFYICSLPFWLQYVLQH. Over 85–89 the chain is Extracellular; it reads DHWSH. Residues 90–125 traverse the membrane as a helical segment; it reads DDLSCQVCGILLYENIYISVGFLCCISIDRYLAVAH. At 126-133 the chain is on the cytoplasmic side; sequence PFRFHQFR. A helical membrane pass occupies residues 134-160; the sequence is TLKAAMGVSALIWVKELLTSIYFLMHE. At 161–176 the chain is on the extracellular side; that stretch reads EVVEDADRHRVCFEHY. The interval 161-176 is extracellular loop 2 (ECL2); sequence EVVEDADRHRVCFEHY. A helical membrane pass occupies residues 177–214; sequence PLEPRQRGINYYRFLVGFLFPICLLLASYRGILRAVRR. At 215–218 the chain is on the cytoplasmic side; the sequence is SHGT. The helical transmembrane segment at 219-254 threads the bilayer; that stretch reads QKSRKDQIQRLVLSTVVIFLACFLPYHVLLLVRSLW. Residues 255–260 lie on the Extracellular side of the membrane; it reads ESSCDF. A helical membrane pass occupies residues 261–289; sequence AKGIFNAYHFSLLLTSFNCVADPVLYCFV. Over 290–361 the chain is Cytoplasmic; sequence SETTHRDLAR…MGGSPAGGLS (72 aa). A disordered region spans residues 340–361; it reads LHPAFQTPHPPGMGGSPAGGLS. Positions 351–361 are enriched in gly residues; that stretch reads GMGGSPAGGLS.

It belongs to the G-protein coupled receptor 1 family.

It localises to the cell membrane. With respect to regulation, activated by a network of residues that connects an extracellular-facing cavity to Glu-149, a conserved charged residue buried in the transmembrane core of the receptor. Protonation likely drives conformational changes in extracellular loop 2 (ECL2), which stabilizes movement of transmembrane 3 (TM3) and a series of rearrangements that connect the extracellular-facing cavity to Glu-149, a residue only conserved in proton-sensing G-protein coupled receptors. Activated in an allosteric manner by divalent metal ions at the extracellular surface following the order: Cd(2+) &gt; Co(2+) &gt; Ni(2+) &gt; Zn(2+) &gt; Fe(2+) &gt; Ca(2+) &gt; Mg(2+). In terms of biological role, proton-sensing G-protein coupled receptor activated by extracellular pH, which is required to monitor pH changes and generate adaptive reactions. The receptor is almost silent at pH 7.8 but fully activated at pH 6.8. Ligand binding causes a conformation change that triggers signaling via guanine nucleotide-binding proteins (G proteins) and modulates the activity of downstream effectors, such as phospholipase C. GPR68 is mainly coupled to G(q) G proteins and mediates production of diacylglycerol (DAG) and inositol 1,4,5-trisphosphate (IP3). Acts as a key mechanosensor of fluid shear stress and membrane stretch. Expressed in endothelial cells of small-diameter resistance arteries, where it mediates flow-induced dilation in response to shear stress. May represents an osteoblastic pH sensor regulating cell-mediated responses to acidosis in bone. Acts as a regulator of calcium-sensing receptor CASR in a seesaw manner: GPR68-mediated signaling inhibits CASR signaling in response to protons, while CASR inhibits GPR68 in presence of extracellular calcium. This Bos taurus (Bovine) protein is G-protein coupled receptor 68 (GPR68).